A 693-amino-acid polypeptide reads, in one-letter code: Periplasmic alpha-galactoside-binding protein (693 aa).

An N-terminal signal peptide occupies residues 1–20 (MKTHRLNMTASLLIGISAFA).

The protein belongs to the bacterial solute-binding protein 5 family.

It localises to the periplasm. Functionally, involved in the transport of alpha-galactosides. Required for the utilization of raffinose and melibiose. Probably acts as a periplasmic substrate-binding protein for a transport system. The protein is Periplasmic alpha-galactoside-binding protein of Rhizobium meliloti (strain 1021) (Ensifer meliloti).